A 125-amino-acid polypeptide reads, in one-letter code: Large ribosomal subunit protein bL12 (125 aa).

This sequence belongs to the bacterial ribosomal protein bL12 family. As to quaternary structure, homodimer. Part of the ribosomal stalk of the 50S ribosomal subunit. Forms a multimeric L10(L12)X complex, where L10 forms an elongated spine to which 2 to 4 L12 dimers bind in a sequential fashion. Binds GTP-bound translation factors.

Forms part of the ribosomal stalk which helps the ribosome interact with GTP-bound translation factors. Is thus essential for accurate translation. The sequence is that of Large ribosomal subunit protein bL12 from Ruegeria sp. (strain TM1040) (Silicibacter sp.).